We begin with the raw amino-acid sequence, 150 residues long: Large ribosomal subunit protein bL9 (150 aa).

It belongs to the bacterial ribosomal protein bL9 family.

Binds to the 23S rRNA. The polypeptide is Large ribosomal subunit protein bL9 (Burkholderia vietnamiensis (strain G4 / LMG 22486) (Burkholderia cepacia (strain R1808))).